Consider the following 554-residue polypeptide: Phenylalanine--tRNA ligase beta subunit (554 aa).

In terms of domain architecture, B5 spans 274-351 (LTPDSAEITI…INYGYENFNG (78 aa)). Mg(2+) contacts are provided by aspartate 329, aspartate 335, and aspartate 339.

Belongs to the phenylalanyl-tRNA synthetase beta subunit family. Type 2 subfamily. As to quaternary structure, tetramer of two alpha and two beta subunits. Mg(2+) serves as cofactor.

The protein localises to the cytoplasm. The catalysed reaction is tRNA(Phe) + L-phenylalanine + ATP = L-phenylalanyl-tRNA(Phe) + AMP + diphosphate + H(+). This Methanococcus aeolicus (strain ATCC BAA-1280 / DSM 17508 / OCM 812 / Nankai-3) protein is Phenylalanine--tRNA ligase beta subunit.